We begin with the raw amino-acid sequence, 140 residues long: Small ribosomal subunit protein bS6 (140 aa).

Residues valine 96–glutamate 140 form a disordered region. Over residues leucine 103 to asparagine 121 the composition is skewed to basic and acidic residues. Residues glutamate 123–glutamate 140 show a composition bias toward acidic residues.

It belongs to the bacterial ribosomal protein bS6 family.

Binds together with bS18 to 16S ribosomal RNA. This chain is Small ribosomal subunit protein bS6, found in Ectopseudomonas mendocina (strain ymp) (Pseudomonas mendocina).